The primary structure comprises 355 residues: Histidinol-phosphate aminotransferase (355 aa).

An N6-(pyridoxal phosphate)lysine modification is found at K218.

The protein belongs to the class-II pyridoxal-phosphate-dependent aminotransferase family. Histidinol-phosphate aminotransferase subfamily. In terms of assembly, homodimer. It depends on pyridoxal 5'-phosphate as a cofactor.

It catalyses the reaction L-histidinol phosphate + 2-oxoglutarate = 3-(imidazol-4-yl)-2-oxopropyl phosphate + L-glutamate. The protein operates within amino-acid biosynthesis; L-histidine biosynthesis; L-histidine from 5-phospho-alpha-D-ribose 1-diphosphate: step 7/9. The protein is Histidinol-phosphate aminotransferase of Chlorobium limicola (strain DSM 245 / NBRC 103803 / 6330).